Consider the following 291-residue polypeptide: MKKFVIFTDSAADLPKSMVKDLDINYLGLICNIDNTEYIDNIDSELTPKAFYNKLREGIMPSTSQVNSFRFVEAFEEYVKQGISILYLAFSSALSGTYNSSLIAREELLEKYPDADIKIVDTRAACLGQGLLVYYAAQMKKDGKSIDEIYSWVEENKNKLCHYFTVDSLDHLKRGGRISSTAAAIGSLLSIKPMLYVNDAGELHNFAKAKGRKKSLKMLFQELEKRIVNPNEQTIFIAHSDCVEDAETLAEMIREKYPVKDILIDYIGIVIGSHTGIGTLAVFFLGDTKEP.

The DegV domain maps to 4–286 (FVIFTDSAAD…IGTLAVFFLG (283 aa)). T63 and S95 together coordinate hexadecanoate.

Its function is as follows. May bind long-chain fatty acids, such as palmitate, and may play a role in lipid transport or fatty acid metabolism. The protein is DegV domain-containing protein CPE0026 of Clostridium perfringens (strain 13 / Type A).